A 33-amino-acid chain; its full sequence is Cytochrome c oxidase subunit 5B liver, mitochondrial (33 aa).

Belongs to the cytochrome c oxidase subunit 5B family. Component of the cytochrome c oxidase (complex IV, CIV), a multisubunit enzyme composed of 14 subunits. The complex is composed of a catalytic core of 3 subunits MT-CO1, MT-CO2 and MT-CO3, encoded in the mitochondrial DNA, and 11 supernumerary subunits COX4I, COX5A, COX5B, COX6A, COX6B, COX6C, COX7A, COX7B, COX7C, COX8 and NDUFA4, which are encoded in the nuclear genome. The complex exists as a monomer or a dimer and forms supercomplexes (SCs) in the inner mitochondrial membrane with NADH-ubiquinone oxidoreductase (complex I, CI) and ubiquinol-cytochrome c oxidoreductase (cytochrome b-c1 complex, complex III, CIII), resulting in different assemblies (supercomplex SCI(1)III(2)IV(1) and megacomplex MCI(2)III(2)IV(2)).

The protein localises to the mitochondrion inner membrane. It functions in the pathway energy metabolism; oxidative phosphorylation. Functionally, component of the cytochrome c oxidase, the last enzyme in the mitochondrial electron transport chain which drives oxidative phosphorylation. The respiratory chain contains 3 multisubunit complexes succinate dehydrogenase (complex II, CII), ubiquinol-cytochrome c oxidoreductase (cytochrome b-c1 complex, complex III, CIII) and cytochrome c oxidase (complex IV, CIV), that cooperate to transfer electrons derived from NADH and succinate to molecular oxygen, creating an electrochemical gradient over the inner membrane that drives transmembrane transport and the ATP synthase. Cytochrome c oxidase is the component of the respiratory chain that catalyzes the reduction of oxygen to water. Electrons originating from reduced cytochrome c in the intermembrane space (IMS) are transferred via the dinuclear copper A center (CU(A)) of subunit 2 and heme A of subunit 1 to the active site in subunit 1, a binuclear center (BNC) formed by heme A3 and copper B (CU(B)). The BNC reduces molecular oxygen to 2 water molecules using 4 electrons from cytochrome c in the IMS and 4 protons from the mitochondrial matrix. The polypeptide is Cytochrome c oxidase subunit 5B liver, mitochondrial (Oncorhynchus mykiss (Rainbow trout)).